A 129-amino-acid polypeptide reads, in one-letter code: UPF0148 protein AF_2370 (129 aa).

The segment at 61–80 (SAAKAESEEKPPESTKPAVK) is disordered.

The protein belongs to the UPF0148 family.

The sequence is that of UPF0148 protein AF_2370 from Archaeoglobus fulgidus (strain ATCC 49558 / DSM 4304 / JCM 9628 / NBRC 100126 / VC-16).